The following is a 277-amino-acid chain: Large ribosomal subunit protein uL2 (277 aa).

The disordered stretch occupies residues 219-277 (TVRGSVMNPNDHPHGGGEGKAPVGRKAPSTPWGKPALGLKTRNKKAKSDKLIVRRRNEK). Over residues 264-277 (AKSDKLIVRRRNEK) the composition is skewed to basic and acidic residues.

Belongs to the universal ribosomal protein uL2 family. In terms of assembly, part of the 50S ribosomal subunit. Forms a bridge to the 30S subunit in the 70S ribosome.

Its function is as follows. One of the primary rRNA binding proteins. Required for association of the 30S and 50S subunits to form the 70S ribosome, for tRNA binding and peptide bond formation. It has been suggested to have peptidyltransferase activity; this is somewhat controversial. Makes several contacts with the 16S rRNA in the 70S ribosome. This chain is Large ribosomal subunit protein uL2, found in Streptococcus gordonii (strain Challis / ATCC 35105 / BCRC 15272 / CH1 / DL1 / V288).